A 750-amino-acid polypeptide reads, in one-letter code: Protein psiO (750 aa).

The N-terminal stretch at 1–22 (MKEKIKLSLLILTSIILAVANS) is a signal peptide. Topologically, residues 23-688 (QTQPKTLAMT…GCNTAAVVST (666 aa)) are extracellular. N-linked (GlcNAc...) asparagine glycosylation occurs at asparagine 129. A PA14 domain is found at 140–286 (QEYFPINGKG…DDYCGVCNGD (147 aa)). Asparagine 447, asparagine 506, asparagine 554, asparagine 571, and asparagine 659 each carry an N-linked (GlcNAc...) asparagine glycan. The chain crosses the membrane as a helical span at residues 689-709 (AVIAGVTVAAVVGLGIFLYGG). Over 710-750 (KKGYDYYQDNKSKGMTGANSNPLYKESGNAGQNPLYNDNNL) the chain is Cytoplasmic. The tract at residues 727-750 (ANSNPLYKESGNAGQNPLYNDNNL) is disordered. Residues 738 to 750 (NAGQNPLYNDNNL) are compositionally biased toward polar residues.

This sequence belongs to the prespore-cell-inducing factor family.

Its subcellular location is the membrane. The polypeptide is Protein psiO (psiO) (Dictyostelium discoideum (Social amoeba)).